The following is a 316-amino-acid chain: Metal cation efflux system protein CzcD (316 aa).

Over 1–16 (MGAGHSHDHPGGNERS) the chain is Cytoplasmic. A helical membrane pass occupies residues 17–37 (LKIALALTGTFLIAEVVGGVM). Topologically, residues 38-46 (TKSLALISD) are periplasmic. A helical transmembrane segment spans residues 47–67 (AAHMLTDTVALAIALAAIAIA). Over 68–81 (KRPADKKRTFGYYR) the chain is Cytoplasmic. Residues 82–102 (FEILAAAFNALLLFGVAIYIL) form a helical membrane-spanning segment. Topologically, residues 103-114 (YEAYLRLKSPPQ) are periplasmic. The chain crosses the membrane as a helical span at residues 115 to 135 (IESTGMFVVAVLGLIINLISM). Topologically, residues 136–151 (RMLSSGQSSSLNVKGA) are cytoplasmic. A run of 2 helical transmembrane segments spans residues 152 to 172 (YLEV…AIII) and 174 to 194 (FTGW…WVLP). The Cytoplasmic portion of the chain corresponds to 195–316 (RTWILLKSSL…GSKSLAAGGN (122 aa)).

Belongs to the cation diffusion facilitator (CDF) transporter (TC 2.A.4) family. SLC30A subfamily.

It is found in the cell inner membrane. Its activity is regulated as follows. Efflux is inhibited by FCCP. Mediates a low-level metal ion resistance, probably by efflux of cations from the cytoplasm into the periplasm. Also mediates resistance to cobalt, cadmium and zinc via regulation of the Czc system. May repress expression of the Czc system by an export of the inducing cations. Binds and transports zinc. Can also bind cobalt, copper and nickel. The protein is Metal cation efflux system protein CzcD (czcD) of Cupriavidus metallidurans (strain ATCC 43123 / DSM 2839 / NBRC 102507 / CH34) (Ralstonia metallidurans).